The sequence spans 330 residues: Fructose-1,6-bisphosphatase class 1 (330 aa).

Residues E84, D103, L105, and D106 each contribute to the Mg(2+) site. Substrate contacts are provided by residues 106–109 (DGSS), N196, and K262. E268 is a binding site for Mg(2+).

The protein belongs to the FBPase class 1 family. In terms of assembly, homotetramer. The cofactor is Mg(2+).

The protein resides in the cytoplasm. It carries out the reaction beta-D-fructose 1,6-bisphosphate + H2O = beta-D-fructose 6-phosphate + phosphate. Its pathway is carbohydrate biosynthesis; gluconeogenesis. The chain is Fructose-1,6-bisphosphatase class 1 from Shewanella baltica (strain OS185).